A 316-amino-acid chain; its full sequence is Protein prune homolog 2 (316 aa).

Residues 1–24 (MDIPLDAAEIRPEPPNSLDLNGSS) are disordered. In terms of domain architecture, CRAL-TRIO spans 128-285 (IEPYKKVISH…TIVKLDEELR (158 aa)). The tract at residues 287-316 (SESPKAGCLPNEPEMNTLEEEFENKMGDND) is disordered.

It localises to the cytoplasm. This is Protein prune homolog 2 (Prune2) from Xenopus tropicalis (Western clawed frog).